The primary structure comprises 437 residues: Trigger factor (437 aa).

One can recognise a PPIase FKBP-type domain in the interval 161 to 246; that stretch reads DDQVNIDFVG…VNSVSAPVLP (86 aa).

This sequence belongs to the FKBP-type PPIase family. Tig subfamily.

The protein resides in the cytoplasm. The catalysed reaction is [protein]-peptidylproline (omega=180) = [protein]-peptidylproline (omega=0). Functionally, involved in protein export. Acts as a chaperone by maintaining the newly synthesized protein in an open conformation. Functions as a peptidyl-prolyl cis-trans isomerase. The sequence is that of Trigger factor from Pseudomonas putida (strain GB-1).